We begin with the raw amino-acid sequence, 422 residues long: Hispidin-3-hydroxylase (422 aa).

A helical transmembrane segment spans residues 6 to 26; that stretch reads NSLSVLIVGAGLGGLAAAIAL. Residues alanine 50, arginine 108, and aspartate 318 each coordinate FAD.

Belongs to the paxM FAD-dependent monooxygenase family. In terms of assembly, monomer. Requires FAD as cofactor.

The protein resides in the membrane. It carries out the reaction hispidin + NADH + O2 + H(+) = 3-hydroxyhispidin + NAD(+) + H2O. It catalyses the reaction hispidin + NADPH + O2 + H(+) = 3-hydroxyhispidin + NADP(+) + H2O. Its pathway is secondary metabolite biosynthesis. Its function is as follows. Hispidin-3-hydroxylase; part of the gene cluster that mediates the fungal bioluminescence cycle. Hydroxylates hispidin in order to produce the fungal luciferin 3-hydroxyhispidin. The fungal bioluminescence cycle begins with the hispidin synthetase that catalyzes the formation of hispidin which is further hydroxylated by the hispidin-3-hydroxylase, yielding the fungal luciferin 3-hydroxyhispidin. The luciferase then produces an endoperoxide as a high-energy intermediate with decomposition that yields oxyluciferin (also known as caffeoylpyruvate) and light emission. Oxyluciferin can be recycled to caffeic acid by caffeoylpyruvate hydrolase. The protein is Hispidin-3-hydroxylase of Neonothopanus nambi (Agaricus nambi).